The following is a 382-amino-acid chain: Alkanesulfonate monooxygenase (382 aa).

It belongs to the SsuD family. Homotetramer.

The catalysed reaction is an alkanesulfonate + FMNH2 + O2 = an aldehyde + FMN + sulfite + H2O + 2 H(+). In terms of biological role, catalyzes the desulfonation of aliphatic sulfonates. This chain is Alkanesulfonate monooxygenase, found in Yersinia pestis bv. Antiqua (strain Antiqua).